We begin with the raw amino-acid sequence, 283 residues long: MLRVAVPNKGTLSEPAAEILSEAGYRRRTDTKDLTVVDPANNVEFFFLRPKDIAIYVGSGQLDLGITGRDLAAESDAPVRERLALGFGSSTFRYAAPAGRDWAPEDLAGRRIATAFPNLVRKDLAGRGIEATVIRLDGAVEISVALGVADAIADVVGSGRTLGLHNLVAFGDSLCDSEAVLIERDGAGDENAAARDQLAARVQGVVFGQQYLMLDYDCPRHVLDRATEVTPGLESPTIAPLADQDWVAVRALVPRRDVNSIMDELAAIGAKAILASDIRFCRF.

Belongs to the ATP phosphoribosyltransferase family. Long subfamily. As to quaternary structure, equilibrium between an active dimeric form, an inactive hexameric form and higher aggregates. Interconversion between the various forms is largely reversible and is influenced by the natural substrates and inhibitors of the enzyme. The cofactor is Mg(2+).

The protein resides in the cytoplasm. The enzyme catalyses 1-(5-phospho-beta-D-ribosyl)-ATP + diphosphate = 5-phospho-alpha-D-ribose 1-diphosphate + ATP. Its pathway is amino-acid biosynthesis; L-histidine biosynthesis; L-histidine from 5-phospho-alpha-D-ribose 1-diphosphate: step 1/9. With respect to regulation, feedback inhibited by histidine. Functionally, catalyzes the condensation of ATP and 5-phosphoribose 1-diphosphate to form N'-(5'-phosphoribosyl)-ATP (PR-ATP). Has a crucial role in the pathway because the rate of histidine biosynthesis seems to be controlled primarily by regulation of HisG enzymatic activity. This chain is ATP phosphoribosyltransferase, found in Mycobacterium sp. (strain KMS).